We begin with the raw amino-acid sequence, 1207 residues long: DNA-directed RNA polymerase, mitochondrial (1207 aa).

The transit peptide at 1 to 41 (MSALRWTRSAAGLGRVLRSPGPHRPPSEEGTFGGFCSSRRS) directs the protein to the mitochondrion. 2 disordered regions span residues 1-48 (MSAL…SPRE) and 82-103 (KKVQVDRPPQGHSSRWAQKLEA). PPR repeat units lie at residues 232 to 266 (TLHMYNTVMLGWARKGSFRELVYVFLMLKDAGLSP) and 267 to 302 (DLCSYAAALQCMGRRDQDVRTIQRCLKQMMEEGFQP). Positions 702–724 (VPPPRSEAPRPARYQLPPGSTPV) are disordered. Positions 773-1207 (FRGRTYPCPP…QVIRSTYFFS (435 aa)) are mediates interaction with TEFM. Active-site residues include D893, K962, and D1121.

It belongs to the phage and mitochondrial RNA polymerase family. In terms of assembly, homodimer. Component of the mitochondrial transcription initiation complex, composed at least of TFB2M, TFAM and POLRMT. In this complex TFAM recruits POLRMT to the promoter whereas TFB2M induces structural changes in POLRMT to enable promoter opening and trapping of the DNA non-template strand. Upon metabolic stress, forms a complex composed of FOXO3, SIRT3 and mitochondrial RNA polymerase POLRMT; the complex is recruited to mtDNA in a SIRT3-dependent manner. Also forms a complex composed of FOXO3, SIRT3, TFAM and POLRMT. Interacts with TFB1M and TFB2M, leading to the stimulation of transcription. Interacts with TEFM. Interacts with MTRES1.

It localises to the mitochondrion. The enzyme catalyses RNA(n) + a ribonucleoside 5'-triphosphate = RNA(n+1) + diphosphate. In terms of biological role, DNA-dependent RNA polymerase catalyzes the transcription of mitochondrial DNA into RNA using the four ribonucleoside triphosphates as substrates. Component of the mitochondrial transcription initiation complex, composed at least of TFB2M, TFAM and POLRMT that is required for basal transcription of mitochondrial DNA. In this complex, TFAM recruits POLRMT to a specific promoter whereas TFB2M induces structural changes in POLRMT to enable promoter opening and trapping of the DNA non-template strand. Has DNA primase activity. Catalyzes the synthesis of short RNA primers that are necessary for the initiation of lagging-strand DNA synthesis from the origin of light-strand DNA replication (OriL). This Mus musculus (Mouse) protein is DNA-directed RNA polymerase, mitochondrial.